The chain runs to 64 residues: Prokaryotic ubiquitin-like protein Pup (64 aa).

The tract at residues 1–32 is disordered; it reads MNAKQTQIMGGGGRDEDNAEDSAQASGQVQIN. Positions 20–58 are ARC ATPase binding; that stretch reads EDSAQASGQVQINTEGVDSLLDEIDGLLENNAEEFVRSY. A compositionally biased stretch (polar residues) spans 21-32; that stretch reads DSAQASGQVQIN. E64 is covalently cross-linked (Isoglutamyl lysine isopeptide (Glu-Lys) (interchain with K-? in acceptor proteins)).

The protein belongs to the prokaryotic ubiquitin-like protein family. As to quaternary structure, strongly interacts with the proteasome-associated ATPase ARC through a hydrophobic interface; the interacting region of Pup lies in its C-terminal half. There is one Pup binding site per ARC hexamer ring.

The protein operates within protein degradation; proteasomal Pup-dependent pathway. In terms of biological role, protein modifier that is covalently attached to lysine residues of substrate proteins, thereby targeting them for proteasomal degradation. The tagging system is termed pupylation. The protein is Prokaryotic ubiquitin-like protein Pup of Corynebacterium glutamicum (strain R).